The sequence spans 332 residues: UPF0194 membrane protein YbhG (332 aa).

An N-terminal signal peptide occupies residues 1-16 (MMKKPVVIGLAVVVLA). Positions 108 to 209 (EEIAQAAAAV…LNLQDSTLIA (102 aa)) form a coiled coil.

The protein belongs to the UPF0194 family.

It is found in the periplasm. The polypeptide is UPF0194 membrane protein YbhG (Shigella boydii serotype 4 (strain Sb227)).